The chain runs to 841 residues: Alpha-glucan phosphorylase 2, cytosolic (841 aa).

The disordered stretch occupies residues 1-24; that stretch reads MANANGKAATSLPEKISAKANPEA. Residue Lys-687 is modified to N6-(pyridoxal phosphate)lysine.

The protein belongs to the glycogen phosphorylase family. It depends on pyridoxal 5'-phosphate as a cofactor.

The protein localises to the cytoplasm. The catalysed reaction is [(1-&gt;4)-alpha-D-glucosyl](n) + phosphate = [(1-&gt;4)-alpha-D-glucosyl](n-1) + alpha-D-glucose 1-phosphate. Its function is as follows. Phosphorylase is an important allosteric enzyme in carbohydrate metabolism. Enzymes from different sources differ in their regulatory mechanisms and in their natural substrates. However, all known phosphorylases share catalytic and structural properties. The protein is Alpha-glucan phosphorylase 2, cytosolic (PHS2) of Arabidopsis thaliana (Mouse-ear cress).